The sequence spans 161 residues: Early E3 17.7 kDa glycoprotein (161 aa).

2 N-linked (GlcNAc...) asparagine; by host glycosylation sites follow: N14 and N87. A helical membrane pass occupies residues 102-129; the sequence is IINPAIFLFLHVLTLVIVLAMAAEVIYN.

The protein resides in the host membrane. This is Early E3 17.7 kDa glycoprotein from Murine adenovirus A serotype 1 (MAdV-1).